Consider the following 381-residue polypeptide: CCN family member 1 (381 aa).

The signal sequence occupies residues 1–24 (MSSRIARALALVVTLLHLTRLALS). An IGFBP N-terminal domain is found at 25 to 94 (TCPAACHCPL…TALKGICRAQ (70 aa)). Disulfide bonds link Cys26–Cys50, Cys30–Cys52, Cys32–Cys53, Cys39–Cys56, Cys64–Cys78, and Cys70–Cys91. Residues 98-164 (RPCEYNSRIY…GQCCEEWVCD (67 aa)) form the VWFC domain. Position 188 is a phosphoserine (Ser188). One can recognise a TSP type-1 domain in the interval 228-273 (KCIVQTTSWSQCSKTCGTGISTRVTNDNPECRLVKETRICEVRPCG). The tract at residues 279 to 315 (SLKKGKKCSKTKKSPEPVRFTYAGCLSVKKYRPKYCG) is heparin-binding. Intrachain disulfides connect Cys286/Cys323, Cys303/Cys337, Cys314/Cys353, Cys317/Cys355, and Cys322/Cys359. Residues 286–360 (CSKTKKSPEP…QSCKCNYNCP (75 aa)) form the CTCK domain.

It belongs to the CCN family. As to quaternary structure, interaction with integrins is heparin- and cell-type-dependent and promotes cell adhesion.

The protein localises to the secreted. Functionally, promotes cell proliferation, chemotaxis, angiogenesis and cell adhesion. Appears to play a role in wound healing by up-regulating, in skin fibroblasts, the expression of a number of genes involved in angiogenesis, inflammation and matrix remodeling including VEGA-A, VEGA-C, MMP1, MMP3, TIMP1, uPA, PAI-1 and integrins alpha-3 and alpha-5. CCN1-mediated gene regulation is dependent on heparin-binding. Down-regulates the expression of alpha-1 and alpha-2 subunits of collagen type-1. Promotes cell adhesion and adhesive signaling through integrin alpha-6/beta-1, cell migration through integrin alpha-1/beta-5 and cell proliferation through integrin alpha-v/beta-3. The protein is CCN family member 1 (CCN1) of Pan troglodytes (Chimpanzee).